A 314-amino-acid polypeptide reads, in one-letter code: Olfactory receptor 8U9 (314 aa).

The Extracellular portion of the chain corresponds to 1-25 (MAQINCTQVTEFILVGLTDREELKM). N-linked (GlcNAc...) asparagine glycosylation is present at Asn5. The chain crosses the membrane as a helical span at residues 26–46 (PLFVVFLSIYLFTTLGNLGLI). Residues 47–54 (LVIRTDAR) lie on the Cytoplasmic side of the membrane. A helical transmembrane segment spans residues 55 to 75 (LHTPMYFFLSNLAFVDFCYSS). The Extracellular segment spans residues 76–99 (VITPKMLGNFLYKQNMISFNACAA). Cys97 and Cys189 are joined by a disulfide. A helical transmembrane segment spans residues 100 to 120 (QLGCFLAFMTAECLLLASMAY). Over 121–133 (DRYVAICNPLLYM) the chain is Cytoplasmic. Residues 134–154 (VLMSPGICFQLVAAPYSYSFL) form a helical membrane-spanning segment. Residues 155–196 (VALFHAILTFRLCYCHSNAINHFYCDDMPLLRLTCSDTHSKQ) lie on the Extracellular side of the membrane. A helical transmembrane segment spans residues 197–217 (LWIFVCAGIMFISSLLIVFIS). Over 218–237 (YTFIISAILRMRSAEGRRKA) the chain is Cytoplasmic. Residues 238–258 (FSTCGSHMLAVTIFYGTLIFM) form a helical membrane-spanning segment. At 259–271 (YLQPSSNHSLDTD) the chain is on the extracellular side. An N-linked (GlcNAc...) asparagine glycan is attached at Asn265. Residues 272-292 (KMASVFYTVIIPMLNPLIYSL) form a helical membrane-spanning segment. Residues 293–314 (RNKEVKDALKKLIASKNQMLSS) are Cytoplasmic-facing.

Belongs to the G-protein coupled receptor 1 family.

The protein localises to the cell membrane. Its function is as follows. Potential odorant receptor. The sequence is that of Olfactory receptor 8U9 from Mus musculus (Mouse).